Consider the following 156-residue polypeptide: Transcription antitermination protein NusB (156 aa).

The protein belongs to the NusB family.

In terms of biological role, involved in transcription antitermination. Required for transcription of ribosomal RNA (rRNA) genes. Binds specifically to the boxA antiterminator sequence of the ribosomal RNA (rrn) operons. This chain is Transcription antitermination protein NusB, found in Xanthomonas oryzae pv. oryzae (strain MAFF 311018).